The primary structure comprises 320 residues: Homoserine kinase (320 aa).

100–110 provides a ligand contact to ATP; sequence PLSSGMGSSAA.

The protein belongs to the GHMP kinase family. Homoserine kinase subfamily.

It is found in the cytoplasm. The enzyme catalyses L-homoserine + ATP = O-phospho-L-homoserine + ADP + H(+). It participates in amino-acid biosynthesis; L-threonine biosynthesis; L-threonine from L-aspartate: step 4/5. Functionally, catalyzes the ATP-dependent phosphorylation of L-homoserine to L-homoserine phosphate. In Chlorobium phaeobacteroides (strain DSM 266 / SMG 266 / 2430), this protein is Homoserine kinase.